The primary structure comprises 415 residues: uncharacterized protein (415 aa).

4 residues coordinate [4Fe-4S] cluster: Cys-66, Cys-72, Cys-75, and Cys-149. The S-adenosyl-L-methionine site is built by Gln-249, Phe-276, Glu-296, and Asp-344. Catalysis depends on Cys-370, which acts as the Nucleophile.

Belongs to the class I-like SAM-binding methyltransferase superfamily. RNA M5U methyltransferase family.

This is an uncharacterized protein from Brucella suis biovar 1 (strain 1330).